Consider the following 135-residue polypeptide: Ribonuclease P protein component (135 aa).

Belongs to the RnpA family. As to quaternary structure, consists of a catalytic RNA component (M1 or rnpB) and a protein subunit.

It carries out the reaction Endonucleolytic cleavage of RNA, removing 5'-extranucleotides from tRNA precursor.. RNaseP catalyzes the removal of the 5'-leader sequence from pre-tRNA to produce the mature 5'-terminus. It can also cleave other RNA substrates such as 4.5S RNA. The protein component plays an auxiliary but essential role in vivo by binding to the 5'-leader sequence and broadening the substrate specificity of the ribozyme. This is Ribonuclease P protein component from Pseudomonas aeruginosa (strain LESB58).